The following is a 311-amino-acid chain: Solute carrier family 25 member 36 (311 aa).

3 Solcar repeats span residues 4–108, 116–203, and 224–308; these read RDTL…CKEK, DSTQ…IKQK, and SDFV…VVYL. Helical transmembrane passes span 7-27, 41-57, 111-131, 180-200, 226-246, and 291-311; these read LVHL…TCPL, LYIS…ASVN, GVFD…AGFT, MSAS…YESI, FVRM…IAYP, and QIPN…LLNG.

It belongs to the mitochondrial carrier (TC 2.A.29) family.

The protein resides in the mitochondrion inner membrane. It catalyses the reaction UTP(in) + CTP(out) = UTP(out) + CTP(in). The catalysed reaction is CTP(out) + UDP(in) = CTP(in) + UDP(out). The enzyme catalyses UMP(in) + CTP(out) = UMP(out) + CTP(in). It carries out the reaction dUTP(in) + CTP(out) = dUTP(out) + CTP(in). It catalyses the reaction dUMP(in) + CTP(out) = dUMP(out) + CTP(in). The catalysed reaction is CDP(in) + CTP(out) = CDP(out) + CTP(in). The enzyme catalyses CTP(out) + CMP(in) = CTP(in) + CMP(out). It carries out the reaction dCTP(in) + CTP(out) = dCTP(out) + CTP(in). It catalyses the reaction dCDP(in) + CTP(out) = dCDP(out) + CTP(in). The catalysed reaction is dCMP(in) + CTP(out) = dCMP(out) + CTP(in). The enzyme catalyses GTP(in) + CTP(out) = GTP(out) + CTP(in). It carries out the reaction CTP(out) + GDP(in) = CTP(in) + GDP(out). It catalyses the reaction GMP(in) + CTP(out) = GMP(out) + CTP(in). The catalysed reaction is dGTP(in) + CTP(out) = dGTP(out) + CTP(in). The enzyme catalyses dGMP(in) + CTP(out) = dGMP(out) + CTP(in). It carries out the reaction ITP(in) + CTP(out) = ITP(out) + CTP(in). It catalyses the reaction IDP(in) + CTP(out) = IDP(out) + CTP(in). The catalysed reaction is IMP(in) + CTP(out) = IMP(out) + CTP(in). The enzyme catalyses CTP(out) = CTP(in). In terms of biological role, mitochondrial transporter that imports/exports pyrimidine nucleotides into and from mitochondria. Selectively transports cytosine, guanosine, inosine and uridine (deoxy)nucleoside mono-, di-, and triphosphates by antiport mechanism. Catalyzes uniport at much lower rate. May import (deoxy)nucleoside triphosphates in exchange for intramitochondrial (deoxy)nucleoside mono- and diphosphates, thus providing precursors necessary for de novo synthesis of mitochondrial DNA and RNA while exporting products of their catabolism. Participates in mitochondrial genome maintenance, regulation of mitochondrial membrane potential and mitochondrial respiration. The protein is Solute carrier family 25 member 36 (Slc25a36) of Mus musculus (Mouse).